The primary structure comprises 602 residues: Sulfite reductase [NADPH] flavoprotein alpha-component (602 aa).

One can recognise a Flavodoxin-like domain in the interval 68-206 (ITIISASQTG…NYIQWSEELL (139 aa)). FMN is bound by residues 74–79 (SQTGNA), 121–124 (STQG), and 157–166 (LGDVSYNLFC). An FAD-binding FR-type domain is found at 237-451 (YKPAVATVLL…VEEKSNFRLP (215 aa)). Residues threonine 325, lysine 359, 389 to 392 (RLYS), 407 to 409 (TVG), and 422 to 425 (GGSS) each bind FAD. Residues 522–523 (SR), 528–532 (KIYVQ), and aspartate 564 contribute to the NADP(+) site. Residue tyrosine 602 coordinates FAD.

It belongs to the NADPH-dependent sulphite reductase flavoprotein subunit CysJ family. In the N-terminal section; belongs to the flavodoxin family. This sequence in the C-terminal section; belongs to the flavoprotein pyridine nucleotide cytochrome reductase family. In terms of assembly, alpha(8)-beta(8). The alpha component is a flavoprotein, the beta component is a hemoprotein. The cofactor is FAD. FMN is required as a cofactor.

The catalysed reaction is hydrogen sulfide + 3 NADP(+) + 3 H2O = sulfite + 3 NADPH + 4 H(+). The protein operates within sulfur metabolism; hydrogen sulfide biosynthesis; hydrogen sulfide from sulfite (NADPH route): step 1/1. Its function is as follows. Component of the sulfite reductase complex that catalyzes the 6-electron reduction of sulfite to sulfide. This is one of several activities required for the biosynthesis of L-cysteine from sulfate. The flavoprotein component catalyzes the electron flow from NADPH -&gt; FAD -&gt; FMN to the hemoprotein component. The polypeptide is Sulfite reductase [NADPH] flavoprotein alpha-component (Buchnera aphidicola subsp. Schizaphis graminum (strain Sg)).